A 173-amino-acid chain; its full sequence is Crossover junction endodeoxyribonuclease RuvC (173 aa).

Catalysis depends on residues Asp-8, Glu-67, and Asp-139. Mg(2+) is bound by residues Asp-8, Glu-67, and Asp-139.

The protein belongs to the RuvC family. As to quaternary structure, homodimer which binds Holliday junction (HJ) DNA. The HJ becomes 2-fold symmetrical on binding to RuvC with unstacked arms; it has a different conformation from HJ DNA in complex with RuvA. In the full resolvosome a probable DNA-RuvA(4)-RuvB(12)-RuvC(2) complex forms which resolves the HJ. Requires Mg(2+) as cofactor.

The protein localises to the cytoplasm. The enzyme catalyses Endonucleolytic cleavage at a junction such as a reciprocal single-stranded crossover between two homologous DNA duplexes (Holliday junction).. In terms of biological role, the RuvA-RuvB-RuvC complex processes Holliday junction (HJ) DNA during genetic recombination and DNA repair. Endonuclease that resolves HJ intermediates. Cleaves cruciform DNA by making single-stranded nicks across the HJ at symmetrical positions within the homologous arms, yielding a 5'-phosphate and a 3'-hydroxyl group; requires a central core of homology in the junction. The consensus cleavage sequence is 5'-(A/T)TT(C/G)-3'. Cleavage occurs on the 3'-side of the TT dinucleotide at the point of strand exchange. HJ branch migration catalyzed by RuvA-RuvB allows RuvC to scan DNA until it finds its consensus sequence, where it cleaves and resolves the cruciform DNA. The polypeptide is Crossover junction endodeoxyribonuclease RuvC (Vibrio parahaemolyticus serotype O3:K6 (strain RIMD 2210633)).